The primary structure comprises 312 residues: MAELACFVSFSLTEDKVVWYPINKKAVQTMLCAKVEKDQRSNYYDTILYGVAPPPEFRNRFKTNERYGLDYESDQYTELVNLLADTLNMVSMPTEKFQFDIVKTVVQVRHLENLLCRIKDVNDILNANVKLRVKAVMIACNLVNETETTPLTESNDIVYQDSYFTITKLDYSNHKLLPLMADEYKITINTKTDIPDRNQTAFAAYIRYNFNKFAAISHGKRHWRLVLHSQLMSHAERLDRKIKSDKKHGRQFSYDDGDMAFVHPGWKTCIGQLCGGTTFEVAKTSLYSIKPSKTVRTATNKIESDLISMVGN.

ATP contacts are provided by residues 107 to 109, Lys185, and 218 to 220; these read QVR and HGK. The tract at residues 202–238 is RNA-binding; sequence FAAYIRYNFNKFAAISHGKRHWRLVLHSQLMSHAERL. The For NTPase and RTPase activities role is filled by His222. Position 224 (Arg224) interacts with ATP.

This sequence belongs to the rotavirus NSP2 family. In terms of assembly, homooctamer. Interacts with VP1; this interaction is weak. Interacts with NSP5; this interaction leads to up-regulation of NSP5 phosphorylation and formation of viral factories. Interacts with host DCP1A, DCP1B, DDX6, EDC4 and EIF2S1/eIF2-alpha; these interactions are probably part of the sequestration of some host SGs and PBs proteins in viral factories. It depends on Mg(2+) as a cofactor.

The protein localises to the host cytoplasm. In terms of biological role, participates in replication and packaging of the viral genome. Plays a crucial role, together with NSP5, in the formation of virus factories (viroplasms), which are large inclusions in the host cytoplasm where replication intermediates are assembled and viral RNA replication takes place. Displays ssRNA binding, NTPase, RNA triphosphatase (RTPase) and ATP-independent helix-unwinding activities. The unwinding activity may prepare and organize plus-strand RNAs for packaging and replication by removing interfering secondary structures. The RTPase activity plays a role in the removal of the gamma-phosphate from the rotavirus RNA minus strands of dsRNA genome segments. Participates in the selective exclusion of host proteins from stress granules (SG) and P bodies (PB). Also participates in the sequestration of these remodeled organelles in viral factories. The protein is Non-structural protein 2 of Rotavirus C (isolate RVC/Human/United Kingdom/Bristol/1989) (RV-C).